The primary structure comprises 237 residues: RING-H2 finger protein ATL57 (237 aa).

Residues 51–71 (ALTIFILLVALFFMGFFSVYF) traverse the membrane as a helical segment. The RING-type; atypical zinc finger occupies 140 to 182 (CVICLSDFEEGETVKVIPHCGHVFHVDCVDTWLSSYVTCPLCR).

The protein belongs to the RING-type zinc finger family. ATL subfamily.

It localises to the membrane. It catalyses the reaction S-ubiquitinyl-[E2 ubiquitin-conjugating enzyme]-L-cysteine + [acceptor protein]-L-lysine = [E2 ubiquitin-conjugating enzyme]-L-cysteine + N(6)-ubiquitinyl-[acceptor protein]-L-lysine.. The protein operates within protein modification; protein ubiquitination. The chain is RING-H2 finger protein ATL57 (ATL57) from Arabidopsis thaliana (Mouse-ear cress).